A 283-amino-acid polypeptide reads, in one-letter code: Glutamate racemase (283 aa).

Substrate is bound by residues 13–14 and 45–46; these read DS and YG. Cys-76 acts as the Proton donor/acceptor in catalysis. Substrate is bound at residue 77–78; the sequence is NT. Residue Cys-186 is the Proton donor/acceptor of the active site. 187–188 is a binding site for substrate; it reads TH.

The protein belongs to the aspartate/glutamate racemases family.

It catalyses the reaction L-glutamate = D-glutamate. Its pathway is cell wall biogenesis; peptidoglycan biosynthesis. Its function is as follows. Provides the (R)-glutamate required for cell wall biosynthesis. The polypeptide is Glutamate racemase (Microcystis aeruginosa (strain NIES-843 / IAM M-2473)).